Consider the following 216-residue polypeptide: Ribosomal RNA small subunit methyltransferase G (216 aa).

S-adenosyl-L-methionine contacts are provided by residues Gly-73, Leu-78, 124 to 125 (AE), and Arg-139.

This sequence belongs to the methyltransferase superfamily. RNA methyltransferase RsmG family.

Its subcellular location is the cytoplasm. Functionally, specifically methylates the N7 position of guanine in position 518 of 16S rRNA. In Pseudarthrobacter chlorophenolicus (strain ATCC 700700 / DSM 12829 / CIP 107037 / JCM 12360 / KCTC 9906 / NCIMB 13794 / A6) (Arthrobacter chlorophenolicus), this protein is Ribosomal RNA small subunit methyltransferase G.